The primary structure comprises 473 residues: Photosystem II CP43 reaction center protein (473 aa).

The propeptide occupies 1–14 (MKTLYSLRRFYPVE). Residue Thr-15 is modified to N-acetylthreonine. A Phosphothreonine modification is found at Thr-15. 5 helical membrane passes run 69–93 (LFEVAHFVPEKPMYEQGLILLPHLA), 134–155 (LLGPETLEESFPFFGYVWKDRN), 178–200 (KALYFGGVYDTWAPGGGDVRKIT), 255–275 (KPFAWARRALVWSGEAYLSYS), and 291–312 (WFNNTAYPSEFYGPTGPEASQA). Glu-367 contributes to the [CaMn4O5] cluster binding site. A helical transmembrane segment spans residues 447–471 (RARAAAAGFEKGIDRDFEPVLSMTP).

It belongs to the PsbB/PsbC family. PsbC subfamily. As to quaternary structure, PSII is composed of 1 copy each of membrane proteins PsbA, PsbB, PsbC, PsbD, PsbE, PsbF, PsbH, PsbI, PsbJ, PsbK, PsbL, PsbM, PsbT, PsbX, PsbY, PsbZ, Psb30/Ycf12, at least 3 peripheral proteins of the oxygen-evolving complex and a large number of cofactors. It forms dimeric complexes. Binds multiple chlorophylls and provides some of the ligands for the Ca-4Mn-5O cluster of the oxygen-evolving complex. It may also provide a ligand for a Cl- that is required for oxygen evolution. PSII binds additional chlorophylls, carotenoids and specific lipids. is required as a cofactor.

The protein resides in the plastid. It is found in the chloroplast thylakoid membrane. In terms of biological role, one of the components of the core complex of photosystem II (PSII). It binds chlorophyll and helps catalyze the primary light-induced photochemical processes of PSII. PSII is a light-driven water:plastoquinone oxidoreductase, using light energy to abstract electrons from H(2)O, generating O(2) and a proton gradient subsequently used for ATP formation. The sequence is that of Photosystem II CP43 reaction center protein from Panax ginseng (Korean ginseng).